A 353-amino-acid chain; its full sequence is Photosystem II protein D1 (353 aa).

Residue Thr2 is modified to N-acetylthreonine. Phosphothreonine is present on Thr2. A run of 3 helical transmembrane segments spans residues 29–46 (YIGWFGVLMIPTLLTATS), 118–133 (HFLLGVACYMGREWEL), and 142–156 (WIAVAYSAPVAAATA). His118 lines the chlorophyll a pocket. A pheophytin a-binding site is contributed by Tyr126. Residues Asp170 and Glu189 each coordinate [CaMn4O5] cluster. A helical transmembrane segment spans residues 197-218 (FHMLGVAGVFGGSLFSAMHGSL). His198 contributes to the chlorophyll a binding site. A quinone-binding positions include His215 and 264–265 (SF). His215 lines the Fe cation pocket. Residue His272 participates in Fe cation binding. A helical transmembrane segment spans residues 274-288 (FLAAWPVVGIWFTAL). His332, Glu333, Asp342, and Ala344 together coordinate [CaMn4O5] cluster. Positions 345–353 (AVEVPSING) are excised as a propeptide.

Belongs to the reaction center PufL/M/PsbA/D family. In terms of assembly, PSII is composed of 1 copy each of membrane proteins PsbA, PsbB, PsbC, PsbD, PsbE, PsbF, PsbH, PsbI, PsbJ, PsbK, PsbL, PsbM, PsbT, PsbX, PsbY, PsbZ, Psb30/Ycf12, at least 3 peripheral proteins of the oxygen-evolving complex and a large number of cofactors. It forms dimeric complexes. The cofactor is The D1/D2 heterodimer binds P680, chlorophylls that are the primary electron donor of PSII, and subsequent electron acceptors. It shares a non-heme iron and each subunit binds pheophytin, quinone, additional chlorophylls, carotenoids and lipids. D1 provides most of the ligands for the Mn4-Ca-O5 cluster of the oxygen-evolving complex (OEC). There is also a Cl(-1) ion associated with D1 and D2, which is required for oxygen evolution. The PSII complex binds additional chlorophylls, carotenoids and specific lipids.. Post-translationally, tyr-161 forms a radical intermediate that is referred to as redox-active TyrZ, YZ or Y-Z. C-terminally processed by CTPA; processing is essential to allow assembly of the oxygen-evolving complex and thus photosynthetic growth.

Its subcellular location is the plastid. The protein resides in the chloroplast thylakoid membrane. It catalyses the reaction 2 a plastoquinone + 4 hnu + 2 H2O = 2 a plastoquinol + O2. Its function is as follows. Photosystem II (PSII) is a light-driven water:plastoquinone oxidoreductase that uses light energy to abstract electrons from H(2)O, generating O(2) and a proton gradient subsequently used for ATP formation. It consists of a core antenna complex that captures photons, and an electron transfer chain that converts photonic excitation into a charge separation. The D1/D2 (PsbA/PsbD) reaction center heterodimer binds P680, the primary electron donor of PSII as well as several subsequent electron acceptors. The protein is Photosystem II protein D1 of Cucumis sativus (Cucumber).